The sequence spans 298 residues: uncharacterized protein (298 aa).

To M.tuberculosis Rv1486c, M.bovis Mb1522c and M.avium MAV321.

This is an uncharacterized protein from Mycobacterium leprae (strain TN).